Reading from the N-terminus, the 368-residue chain is Aminomethyltransferase (368 aa).

This sequence belongs to the GcvT family. In terms of assembly, the glycine cleavage system is composed of four proteins: P, T, L and H.

The catalysed reaction is N(6)-[(R)-S(8)-aminomethyldihydrolipoyl]-L-lysyl-[protein] + (6S)-5,6,7,8-tetrahydrofolate = N(6)-[(R)-dihydrolipoyl]-L-lysyl-[protein] + (6R)-5,10-methylene-5,6,7,8-tetrahydrofolate + NH4(+). In terms of biological role, the glycine cleavage system catalyzes the degradation of glycine. The sequence is that of Aminomethyltransferase from Alkaliphilus oremlandii (strain OhILAs) (Clostridium oremlandii (strain OhILAs)).